The primary structure comprises 339 residues: Dihydroorotate dehydrogenase (quinone) (339 aa).

Residues 64 to 68 (AGADK) and Thr-88 contribute to the FMN site. Lys-68 contributes to the substrate binding site. Substrate is bound at residue 113-117 (NRNGF). FMN contacts are provided by Asn-141 and Asn-174. A substrate-binding site is contributed by Asn-174. Residue Ser-177 is the Nucleophile of the active site. Substrate is bound at residue Asn-179. Residues Lys-219 and Thr-247 each contribute to the FMN site. 248–249 (NT) provides a ligand contact to substrate. Residues Gly-270, Gly-299, and 320-321 (YS) contribute to the FMN site.

This sequence belongs to the dihydroorotate dehydrogenase family. Type 2 subfamily. As to quaternary structure, monomer. FMN serves as cofactor.

Its subcellular location is the cell membrane. The enzyme catalyses (S)-dihydroorotate + a quinone = orotate + a quinol. It participates in pyrimidine metabolism; UMP biosynthesis via de novo pathway; orotate from (S)-dihydroorotate (quinone route): step 1/1. Functionally, catalyzes the conversion of dihydroorotate to orotate with quinone as electron acceptor. The protein is Dihydroorotate dehydrogenase (quinone) (pyrD) of Haemophilus influenzae (strain ATCC 51907 / DSM 11121 / KW20 / Rd).